The following is a 439-amino-acid chain: Cell division protein FtsA (439 aa).

The protein belongs to the FtsA/MreB family. As to quaternary structure, self-interacts. Interacts with FtsZ.

It is found in the cell inner membrane. Functionally, cell division protein that is involved in the assembly of the Z ring. May serve as a membrane anchor for the Z ring. In Shigella flexneri, this protein is Cell division protein FtsA.